Consider the following 121-residue polypeptide: Large ribosomal subunit protein bL19 (121 aa).

The protein belongs to the bacterial ribosomal protein bL19 family.

In terms of biological role, this protein is located at the 30S-50S ribosomal subunit interface and may play a role in the structure and function of the aminoacyl-tRNA binding site. This chain is Large ribosomal subunit protein bL19, found in Acidothermus cellulolyticus (strain ATCC 43068 / DSM 8971 / 11B).